The primary structure comprises 650 residues: p-hydroxybenzoic acid efflux pump subunit AaeB (650 aa).

A run of 11 helical transmembrane segments spans residues 7-27, 32-52, 61-81, 87-107, 115-135, 148-168, 365-385, 402-422, 426-446, 450-470, and 478-498; these read FPIKLTFALVAALMIGFHLNL, WAVMTAGIVAGGTAFAAGGDP, GILRIIGTFIGCVAALVIMIA, VVMLLLCCIWAGFCVWLSSLI, LGLAGYTALIIVVTANASGGL, EIILGILCAILADMIFSPRSI, LFWLYTGWTSGSGCMVMLGVI, FVYGMTVAVPLGALYFMYILP, QSAVLLCIAIGLLGFISGILI, QIGTLGAMVGTINVLVLDNPM, and IDNALGQWIGSFVALMVILLI.

It belongs to the aromatic acid exporter ArAE (TC 2.A.85) family.

It localises to the cell inner membrane. In terms of biological role, forms an efflux pump with AaeA. Could function as a metabolic relief valve, allowing to eliminate certain compounds when they accumulate to high levels in the cell. In Pantoea ananatis (strain LMG 20103), this protein is p-hydroxybenzoic acid efflux pump subunit AaeB.